We begin with the raw amino-acid sequence, 319 residues long: tRNA N6-adenosine threonylcarbamoyltransferase (319 aa).

Residues His110 and His114 each contribute to the Fe cation site. Substrate contacts are provided by residues Val135–Gly139, Asp168, Gly181, Asp185, and Asn277. Asp301 is a binding site for Fe cation.

It belongs to the KAE1 / TsaD family. The cofactor is Fe(2+).

Its subcellular location is the cytoplasm. The catalysed reaction is L-threonylcarbamoyladenylate + adenosine(37) in tRNA = N(6)-L-threonylcarbamoyladenosine(37) in tRNA + AMP + H(+). Required for the formation of a threonylcarbamoyl group on adenosine at position 37 (t(6)A37) in tRNAs that read codons beginning with adenine. Is involved in the transfer of the threonylcarbamoyl moiety of threonylcarbamoyl-AMP (TC-AMP) to the N6 group of A37, together with TsaE and TsaB. TsaD likely plays a direct catalytic role in this reaction. This Mycoplasma pneumoniae (strain ATCC 29342 / M129 / Subtype 1) (Mycoplasmoides pneumoniae) protein is tRNA N6-adenosine threonylcarbamoyltransferase.